A 715-amino-acid polypeptide reads, in one-letter code: Methylmalonyl-CoA mutase large subunit (715 aa).

Tyr-70, Met-73, Arg-77, Thr-80, Arg-82, Tyr-84, and Ser-109 together coordinate (R)-methylmalonyl-CoA. Residues Phe-112 and Ala-134 each contribute to the cob(II)alamin site. Positions 190 and 192 each coordinate (R)-methylmalonyl-CoA. Residues Val-201 and Arg-202 each coordinate cob(II)alamin. (R)-methylmalonyl-CoA-binding residues include Arg-202, His-239, Arg-278, and Ser-280. Gly-328, Glu-365, Ala-368, Gly-599, His-600, Asp-601, Arg-602, Ser-645, Leu-647, Gly-676, and Thr-699 together coordinate cob(II)alamin. The B12-binding domain maps to 587 to 715; that stretch reads QPRIMIAKMG…AKVLEILLEE (129 aa).

Belongs to the methylmalonyl-CoA mutase family. Heterodimer of an alpha and a beta chain. The cofactor is adenosylcob(III)alamin.

It carries out the reaction (R)-methylmalonyl-CoA = succinyl-CoA. Catalyzes the isomerization of succinyl-CoA to methylmalonyl-CoA during synthesis of propionate from tricarboxylic acid-cycle intermediates. The chain is Methylmalonyl-CoA mutase large subunit (mutB) from Porphyromonas gingivalis (strain ATCC BAA-308 / W83).